Reading from the N-terminus, the 238-residue chain is Probable transcriptional regulatory protein YeeN (238 aa).

This sequence belongs to the TACO1 family. YeeN subfamily.

Its subcellular location is the cytoplasm. The sequence is that of Probable transcriptional regulatory protein YeeN from Salmonella typhimurium (strain LT2 / SGSC1412 / ATCC 700720).